A 310-amino-acid polypeptide reads, in one-letter code: Formimidoylglutamase (310 aa).

Residues His120, Asp148, His150, Asp152, Asp233, and Asp235 each contribute to the Mn(2+) site.

This sequence belongs to the arginase family. The cofactor is Mn(2+).

The enzyme catalyses N-formimidoyl-L-glutamate + H2O = formamide + L-glutamate. The protein operates within amino-acid degradation; L-histidine degradation into L-glutamate; L-glutamate from N-formimidoyl-L-glutamate (hydrolase route): step 1/1. Its function is as follows. Catalyzes the conversion of N-formimidoyl-L-glutamate to L-glutamate and formamide. The sequence is that of Formimidoylglutamase from Nocardia farcinica (strain IFM 10152).